A 592-amino-acid polypeptide reads, in one-letter code: Medium-chain-fatty-acid--[acyl-carrier-protein] ligase JamA (592 aa).

This sequence belongs to the ATP-dependent AMP-binding enzyme family.

It carries out the reaction a medium-chain fatty acid + holo-[ACP] + ATP = a medium-chain fatty acyl-[ACP] + AMP + diphosphate. The catalysed reaction is a medium-chain fatty acid + ATP + H(+) = a medium-chain fatty acyl-AMP + diphosphate. It catalyses the reaction a medium-chain fatty acyl-AMP + holo-[ACP] = a medium-chain fatty acyl-[ACP] + AMP + H(+). Its function is as follows. Ligase involved in the biosynthesis of jamaicamides, which show sodium channel blocking activity and fish toxicity. Initiates jamaicamide biosynthesis by the activation of the starter unit, 5-hexenoic acid, followed by the loading of the activated 5-hexenoic acid onto the acyl carrier protein JamC. In vitro, can also use 5-hexynoic acid, heptanoic acid, butanoic acid, hexanoic acid and benzoic acid. The sequence is that of Medium-chain-fatty-acid--[acyl-carrier-protein] ligase JamA from Moorena producens (strain JHB).